A 291-amino-acid polypeptide reads, in one-letter code: Acetyl-coenzyme A carboxylase carboxyl transferase subunit beta (291 aa).

A disordered region spans residues 1-23 (MSWLSKLMPSGIRTDNTPSKKRS). The 264-residue stretch at 28 to 291 (LWEKCSNCGS…LGRQPAPEVA (264 aa)) folds into the CoA carboxyltransferase N-terminal domain. The Zn(2+) site is built by Cys-32, Cys-35, Cys-51, and Cys-54. The C4-type zinc finger occupies 32–54 (CSNCGSALYRPELEENLEVCPKC).

Belongs to the AccD/PCCB family. Acetyl-CoA carboxylase is a heterohexamer composed of biotin carboxyl carrier protein (AccB), biotin carboxylase (AccC) and two subunits each of ACCase subunit alpha (AccA) and ACCase subunit beta (AccD). Requires Zn(2+) as cofactor.

It is found in the cytoplasm. The enzyme catalyses N(6)-carboxybiotinyl-L-lysyl-[protein] + acetyl-CoA = N(6)-biotinyl-L-lysyl-[protein] + malonyl-CoA. The protein operates within lipid metabolism; malonyl-CoA biosynthesis; malonyl-CoA from acetyl-CoA: step 1/1. Its function is as follows. Component of the acetyl coenzyme A carboxylase (ACC) complex. Biotin carboxylase (BC) catalyzes the carboxylation of biotin on its carrier protein (BCCP) and then the CO(2) group is transferred by the transcarboxylase to acetyl-CoA to form malonyl-CoA. This Stenotrophomonas maltophilia (strain R551-3) protein is Acetyl-coenzyme A carboxylase carboxyl transferase subunit beta.